Here is a 412-residue protein sequence, read N- to C-terminus: F-box/WD repeat-containing protein 4 (412 aa).

One can recognise an F-box domain in the interval 25–71; it reads GPALWRLPEELLLLICSYLDMRALGRLAQVCRWLRRFTSCDLLWRRI. WD repeat units follow at residues 154–190, 193–229, 236–277, 283–321, 327–366, and 373–409; these read RPLG…IHKI, TFTV…VWPL, QCLH…IWDL, MTHL…YWDL, KCVM…LWDR, and HAFP…VLDF.

In terms of assembly, part of a SCF (SKP1-cullin-F-box) protein ligase complex. Interacts with POUF51. As to expression, expressed in brain, kidney, lung and liver.

Probably recognizes and binds to some phosphorylated proteins and promotes their ubiquitination and degradation. Likely to be involved in key signaling pathways crucial for normal limb development. May participate in Wnt signaling. The sequence is that of F-box/WD repeat-containing protein 4 (FBXW4) from Homo sapiens (Human).